A 155-amino-acid chain; its full sequence is Calmodulin, flagellar (155 aa).

4 consecutive EF-hand domains span residues 14 to 49 (EQIAEFKEAFSLFDKDGDGTITTSELGTVMRSLGQN), 50 to 85 (PTEAELHDMINEVDADGNGTIDFTEFLTMMAKKMKD), 87 to 122 (DNEEEIKEAFKVFDKDGNGFISAQELRHVMCNLGEK), and 123 to 155 (LTDEEVDEMIREADIDGDNQINYTEFVKMMMQK). Positions 27, 29, 31, 33, 38, 63, 65, 67, 69, 74, 100, 102, 104, 111, 136, 138, 140, 142, and 147 each coordinate Ca(2+).

The protein belongs to the calmodulin family.

It is found in the cell projection. Its subcellular location is the cilium. The protein resides in the flagellum. Functionally, calmodulin mediates the control of a large number of enzymes, ion channels and other proteins by Ca(2+). Among the enzymes to be stimulated by the calmodulin-Ca(2+) complex are a number of protein kinases and phosphatases. The chain is Calmodulin, flagellar (CAM1) from Naegleria gruberi (Amoeba).